A 446-amino-acid polypeptide reads, in one-letter code: Transcription factor Sox-10 (446 aa).

Disordered regions lie at residues 1–60, 153–191, and 203–264; these read MSDD…SEDE, RLRM…AEGG, and HLDH…IDFG. Over residues 36–48 the composition is skewed to acidic residues; it reads DDDDDDDEEEEEE. Lysine 52 is covalently cross-linked (Glycyl lysine isopeptide (Lys-Gly) (interchain with G-Cter in SUMO)). Positions 56-96 are dimerization (DIM); sequence DSEDERFPVCIREAVSQVLNGYDWTLVPMPVRVNGGSKSKP. Residues 98–166 constitute a DNA-binding region (HMG box); it reads VKRPMNAFMV…QHKKDHPDYK (69 aa). Over residues 153–167 the composition is skewed to basic and acidic residues; it reads RLRMQHKKDHPDYKY. A compositionally biased stretch (polar residues) spans 213–226; the sequence is SDGNSEHSTGQSHG. The segment at 217–303 is transactivation domain (TAM); it reads SEHSTGQSHG…NGHAGHPSHI (87 aa). Basic and acidic residues predominate over residues 243 to 257; sequence SDGKRDGSHALREGG. The segment at 337–446 is transactivation domain (TAC); it reads KAQVKTESSS…QPVYTTLSRP (110 aa). Lysine 341 participates in a covalent cross-link: Glycyl lysine isopeptide (Lys-Gly) (interchain with G-Cter in SUMO). A disordered region spans residues 421 to 446; sequence SDPPSVAQSHSPTHWEQPVYTTLSRP. Positions 426–446 are enriched in polar residues; that stretch reads VAQSHSPTHWEQPVYTTLSRP.

As to quaternary structure, interacts with the sumoylation factors ube2i/ubc9 and sumo1. Post-translationally, sumoylated. In terms of tissue distribution, first expressed at stages 13/14 at the lateral edges of the neural plate, in the neural crest forming region. By stage 22, neural crest cells migrate in the cranial region and strong expression is seen in the crest cells that populate the branchial arches as well as those migrating in the frontonasal region. Also strongly expressed in the trunk neural crest. Expression in the otic vesicle begins around stage 25 and persists until at least stage 40. At stage 30, expression is down-regulated in the cranial neural crest of the pharyngeal arches but persists in the trunk neural crest, in the otic vesicle and in discrete domains adjacent to the hindbrain. At stage 40, expression is restricted to the otic vesicle, differentiated pigment cells, and in several cranial ganglia.

It is found in the cytoplasm. It localises to the nucleus. In terms of biological role, acts early in neural crest formation, functioning redundantly with the other group E Sox factors sox8 and sox9 to induce neural crest progenitors. Acts downstream of wnt-signaling at the neural plate border. Involved in the specification of neural crest progenitors fated to form the pigment cell lineage. The chain is Transcription factor Sox-10 (sox10) from Xenopus laevis (African clawed frog).